A 163-amino-acid polypeptide reads, in one-letter code: Epididymal-specific lipocalin-6 (163 aa).

Positions 1-20 (MGGLLLAAFLALVSVPRAQA) are cleaved as a signal peptide.

The protein belongs to the calycin superfamily. Lipocalin family. Predominantly expressed in epididymis.

The protein resides in the secreted. Functionally, may play a role in male fertility. In Homo sapiens (Human), this protein is Epididymal-specific lipocalin-6 (LCN6).